The primary structure comprises 435 residues: 5-methylthioadenosine/S-adenosylhomocysteine deaminase (435 aa).

Positions 65 and 67 each coordinate Zn(2+). Residues E94, R150, and H189 each coordinate substrate. Residue H216 coordinates Zn(2+). Positions 219 and 304 each coordinate substrate. D304 contacts Zn(2+).

This sequence belongs to the metallo-dependent hydrolases superfamily. MTA/SAH deaminase family. It depends on Zn(2+) as a cofactor.

It catalyses the reaction S-adenosyl-L-homocysteine + H2O + H(+) = S-inosyl-L-homocysteine + NH4(+). It carries out the reaction S-methyl-5'-thioadenosine + H2O + H(+) = S-methyl-5'-thioinosine + NH4(+). Functionally, catalyzes the deamination of 5-methylthioadenosine and S-adenosyl-L-homocysteine into 5-methylthioinosine and S-inosyl-L-homocysteine, respectively. Is also able to deaminate adenosine. The polypeptide is 5-methylthioadenosine/S-adenosylhomocysteine deaminase (Bacillus thuringiensis (strain Al Hakam)).